The sequence spans 208 residues: Probable nicotinate-nucleotide adenylyltransferase (208 aa).

The protein belongs to the NadD family.

It catalyses the reaction nicotinate beta-D-ribonucleotide + ATP + H(+) = deamido-NAD(+) + diphosphate. It functions in the pathway cofactor biosynthesis; NAD(+) biosynthesis; deamido-NAD(+) from nicotinate D-ribonucleotide: step 1/1. Functionally, catalyzes the reversible adenylation of nicotinate mononucleotide (NaMN) to nicotinic acid adenine dinucleotide (NaAD). The protein is Probable nicotinate-nucleotide adenylyltransferase of Trichormus variabilis (strain ATCC 29413 / PCC 7937) (Anabaena variabilis).